A 490-amino-acid chain; its full sequence is Cysteine--tRNA ligase (490 aa).

Residue cysteine 43 participates in Zn(2+) binding. Positions 45–55 (MTVQSSPHLGH) match the 'HIGH' region motif. The tract at residues 177 to 204 (VDEMSPAEDSDPRGKRDPRDFALWKGHK) is disordered. Residues 186–204 (SDPRGKRDPRDFALWKGHK) are compositionally biased toward basic and acidic residues. 3 residues coordinate Zn(2+): cysteine 228, histidine 253, and glutamate 257. A 'KMSKS' region motif is present at residues 284–288 (KMSKS). Lysine 287 is an ATP binding site.

It belongs to the class-I aminoacyl-tRNA synthetase family. In terms of assembly, monomer. Zn(2+) is required as a cofactor.

The protein localises to the cytoplasm. The catalysed reaction is tRNA(Cys) + L-cysteine + ATP = L-cysteinyl-tRNA(Cys) + AMP + diphosphate. This chain is Cysteine--tRNA ligase, found in Cutibacterium acnes (strain DSM 16379 / KPA171202) (Propionibacterium acnes).